The following is a 681-amino-acid chain: MGSPVHRVSLGDTWSRQMHPDIESERYMQSFDVERLTNILDGGAQNTALRRKVESIIHSYPEFSCKDNYFMTQNERYKAAMRRAFHIRLIARRLGWLEDGRELGYAYRALSGDVALNIHRVFVRALRSLGSEEQIAKWDPLCKNIQIIATYAQTELGHGTYLQGLETEATYDAATQEFVIHSPTLTATKWWPGDLGRSATHALVQAQLICSGARRGMHAFIVPIRSLQDHTPLPGIIIGDIGPKMDFDQTDNGFLQLNHVRVPRENMLSRFAQVLPDGTYVKLGTAQSNYLPMVVVRVELLSGEILPILQKACVIAMRYSVIRRQSRLRPSDPEAKVLDYQTQQQKLFPQLAISYAFHFLAVSLLEFFQHSYTAILNQDFSFLPELHALSTGMKAMMSEFCTQGAEMCRRACGGHGYSKLSGLPSLVTKLSASCTYEGENTVLYLQVARFLVKSYLQTQMSPGSTPQRSLSPSVAYLTAPDLARCPAQRAADFLCPELYTTAWAHVAVRLIKDSVQHLQTLTQSGADQHEAWNQTTVIHLQAAKVHCYYVTVKGFTEALEKLENEPAIQQVLKRLCDLHAIHGILTNSGDFLHDAFLSGAQVDMARTAYLDLLRLIRKDAILLTDAFDFTDQCLNSALGCYDGNVYERLFQWAQKSPTNTQENPAYEEYIRPLLQSWRSKL.

Residues Ser-3 and Ser-9 each carry the phosphoserine modification. Phosphothreonine is present on Thr-13. 4 positions are modified to N6-succinyllysine: Lys-66, Lys-137, Lys-453, and Lys-561. The Microbody targeting signal motif lies at 679–681 (SKL).

The protein belongs to the acyl-CoA oxidase family. Homodimer. FAD is required as a cofactor. As to expression, present in all tissues tested: heart, brain, placenta, lung, liver, skeletal muscle, kidney and pancreas. Most abundant in heart, liver and kidney.

The protein localises to the peroxisome. It carries out the reaction (25R)-3alpha,7alpha,12alpha-trihydroxy-5beta-cholestan-26-oyl-CoA + A + H2O = (24R,25R)-3alpha,7alpha,12alpha,24-tetrahydroxy-5beta-cholestan-26-oyl-CoA + AH2. It catalyses the reaction (25S)-3alpha,7alpha,12alpha-trihydroxy-5beta-cholestan-26-oyl-CoA + O2 = (24E)-3alpha,7alpha,12alpha-trihydroxy-5beta-cholest-24-en-26-oyl-CoA + H2O2. In terms of biological role, oxidizes the CoA esters of the bile acid intermediates di- and tri-hydroxycholestanoic acids. Capable of oxidizing short as well as long chain 2-methyl branched fatty acids. In Homo sapiens (Human), this protein is Peroxisomal acyl-coenzyme A oxidase 2.